Reading from the N-terminus, the 418-residue chain is Methylmalonic aciduria type A protein, mitochondrial (418 aa).

The N-terminal 65 residues, 1–65 (MPMLLPHPHQ…LLSDGLKRKL (65 aa)), are a transit peptide targeting the mitochondrion. Residues 150-158 (GPPGAGKST), D292, and 328-330 (SAR) contribute to the GTP site.

This sequence belongs to the SIMIBI class G3E GTPase family. ArgK/MeaB subfamily. Homodimer. Interacts with MMUT (the apoenzyme form); the interaction is GTP dependent. In terms of tissue distribution, widely expressed. Highest expression is observed in liver and skeletal muscle.

It is found in the mitochondrion. The protein localises to the cytoplasm. It catalyses the reaction GTP + H2O = GDP + phosphate + H(+). GTPase activity is stimulated by MMUT. Its function is as follows. GTPase, binds and hydrolyzes GTP. Involved in intracellular vitamin B12 metabolism, mediates the transport of cobalamin (Cbl) into mitochondria for the final steps of adenosylcobalamin (AdoCbl) synthesis. Functions as a G-protein chaperone that assists AdoCbl cofactor delivery from MMAB to the methylmalonyl-CoA mutase (MMUT). Plays a dual role as both a protectase and a reactivase for MMUT. Protects MMUT from progressive inactivation by oxidation by decreasing the rate of the formation of the oxidized inactive cofactor hydroxocobalamin (OH2Cbl). Additionally acts a reactivase by promoting the replacement of OH2Cbl by the active cofactor AdoCbl, restoring the activity of MMUT in the presence and hydrolysis of GTP. The sequence is that of Methylmalonic aciduria type A protein, mitochondrial from Homo sapiens (Human).